We begin with the raw amino-acid sequence, 167 residues long: Cyclic pyranopterin monophosphate synthase 2 (167 aa).

The disordered stretch occupies residues 1–23; the sequence is MARASGASDYRSGELSHQDERGA. The span at 11–23 shows a compositional bias: basic and acidic residues; the sequence is RSGELSHQDERGA. Substrate is bound by residues 86 to 88 and 122 to 123; these read LCH and ME. Asp-137 is a catalytic residue.

This sequence belongs to the MoaC family. In terms of assembly, homohexamer; trimer of dimers.

It carries out the reaction (8S)-3',8-cyclo-7,8-dihydroguanosine 5'-triphosphate = cyclic pyranopterin phosphate + diphosphate. It functions in the pathway cofactor biosynthesis; molybdopterin biosynthesis. Functionally, catalyzes the conversion of (8S)-3',8-cyclo-7,8-dihydroguanosine 5'-triphosphate to cyclic pyranopterin monophosphate (cPMP). The protein is Cyclic pyranopterin monophosphate synthase 2 (moaC2) of Mycobacterium bovis (strain ATCC BAA-935 / AF2122/97).